Reading from the N-terminus, the 124-residue chain is Putative membrane protein insertion efficiency factor (124 aa).

It belongs to the UPF0161 family.

It localises to the cell inner membrane. Functionally, could be involved in insertion of integral membrane proteins into the membrane. The protein is Putative membrane protein insertion efficiency factor of Psychrobacter arcticus (strain DSM 17307 / VKM B-2377 / 273-4).